Reading from the N-terminus, the 610-residue chain is Myosin light chain kinase 2, skeletal/cardiac muscle (610 aa).

Disordered stretches follow at residues 1–168 and 196–240; these read MATE…HSPS and VSET…DTSQ. Residue alanine 2 is modified to N-acetylalanine. 2 stretches are compositionally biased toward basic and acidic residues: residues 32 to 63 and 70 to 82; these read SEKE…KKNP and KTPE…KKGD. Over residues 94–109 the composition is skewed to gly residues; it reads SGEGDGGGGPAEGGTG. The span at 141–157 shows a compositional bias: basic and acidic residues; sequence GEAKAGKKAAECREAGR. Serine 160, serine 166, and serine 168 each carry phosphoserine. Positions 299–554 constitute a Protein kinase domain; it reads MNSKEALGGG…AEQCLAHPWL (256 aa). ATP contacts are provided by residues 305–313 and lysine 328; that span reads LGGGKFGAV. The Proton acceptor role is filled by aspartate 420. Threonine 459 is modified (phosphothreonine). The interval 588–600 is calmodulin-binding; the sequence is IAVSAANRFKKIS.

It belongs to the protein kinase superfamily. CAMK Ser/Thr protein kinase family. In terms of assembly, may interact with centrin.

The protein resides in the cytoplasm. The catalysed reaction is L-seryl-[myosin light chain] + ATP = O-phospho-L-seryl-[myosin light chain] + ADP + H(+). It catalyses the reaction L-threonyl-[myosin light chain] + ATP = O-phospho-L-threonyl-[myosin light chain] + ADP + H(+). In terms of biological role, implicated in the level of global muscle contraction and cardiac function. Phosphorylates a specific serine in the N-terminus of a myosin light chain. This is Myosin light chain kinase 2, skeletal/cardiac muscle (Mylk2) from Rattus norvegicus (Rat).